A 644-amino-acid polypeptide reads, in one-letter code: MISPVVISRLIDEKKSMENGAILPQAIAQPQLCPTKPALARRDGVSMHRRFALSPDRLGILTPSDDQGLETEPLSTGDNLGKGSHSGFSSITITARRVGPPASSLVWDTFRDPLCPKCKAKDALFQEPPVLAGDAHLCQHNRPFTCTESPSNGSVEGMKVFQAHSRLSARQDYWVTHTNDNEDSFSSDNSPSRKVPLVFSSCVHFRVSQQCPNAIYYLDKSLSVPLERPQIASPKMHRSVLSLSLRCSSHQLTADGVDSSANGEPISTALSQELSEGKQDLLGPQWGQPQGGHWKESPALVPVHLGSGTCPRTGSPPLENVKFADVGRNQVPVRKEKEDHATCTSSSHTNQLSIHIPGWSYRAETKVLSGSKKQQQEAQRTLPAFPVGQKTIKHFPPEGDSSPSSDGQPSILSESNERQHPYFMIPRVPLPGFYCPLQTGCASLQEDGAVQIETHFPKDYTCCDLVVKLKECEKNEDPTVTPEPSPATPSPSTPEGAQSSDPSEDSYEPLLASSMTLQEALEVHRPQFISRSQERLQKLKRMVQQRKTQQKESLGQKQSLLPVRANKKQFTIPHPLSDNLFKPKERCISEKEMHMRSKRIYNNLPEVKKKKEEQKKRMILQSNRLRAEVFKKQLLDQLLQRNAV.

Residues 1 to 67 form a required for interaction with p53/TP53 region; the sequence is MISPVVISRL…LGILTPSDDQ (67 aa). Disordered stretches follow at residues 62–83, 305–349, 367–413, and 475–507; these read TPSD…LGKG, LGSG…SSHT, VLSG…SILS, and NEDP…EDSY. The interval 67–175 is required for interaction with HDAC1; sequence QGLETEPLST…RLSARQDYWV (109 aa). Low complexity predominate over residues 398-410; that stretch reads EGDSSPSSDGQPS. Pro residues predominate over residues 481–492; that stretch reads TPEPSPATPSPS. Residues 516–644 are ALMS motif; that stretch reads TLQEALEVHR…LDQLLQRNAV (129 aa). Positions 598–629 form a coiled coil; sequence KRIYNNLPEVKKKKEEQKKRMILQSNRLRAEV.

Interacts with HDAC1; the interaction prevents binding of HDAC1 to CDKN1A/p21 and facilitates the acetylation and stabilization of CDKN1A/p21. Interacts with p53/TP53; the interaction inhibits binding of p53/TP53 and MDM2. In terms of tissue distribution, highly expressed in testis. Weak expression found in brain, lung, heart, ovary, thymus, spleen and kidney.

It is found in the cytoplasm. It localises to the cytoskeleton. The protein localises to the microtubule organizing center. Its subcellular location is the centrosome. Tumor suppressor that is required to sustain G2/M checkpoint after DNA damage. Acts as a p53/TP53 activator by inhibiting MDM2 binding to p53/TP53 and stimulating non-proteolytic polyubiquitination of p53/TP53. Exhibits ubiquitin ligase (E3) activity and assemble ubiquitin polymers through 'Lys-11'- (K11-), 'Lys-29'- (K29-) and 'Lys-63'- (K63)-linkages, independently of the ubiquitin-conjugating enzyme (E2). Promotes p53/TP53-dependent transcription of CDKN1A/p21, leading to robust checkpoint response. Mediates CDKN1A/p21 protein stability in a ubiquitin-independent manner. Interacts with HDAC1 and prevents binding of HDAC1 to CDKN1A/p21 and facilitates the acetylation and stabilization of CDKN1A/p21. May have a role in the assembly of primary cilia. The polypeptide is (E2-independent) E3 ubiquitin-conjugating enzyme FATS (Mus musculus (Mouse)).